The following is a 336-amino-acid chain: Biotin synthase (336 aa).

The Radical SAM core domain maps to 57–286 (HHGKSIDLCS…RAIVRTAGGR (230 aa)). The [4Fe-4S] cluster site is built by Cys75, Cys79, and Cys82. Positions 119, 151, 211, and 281 each coordinate [2Fe-2S] cluster.

It belongs to the radical SAM superfamily. Biotin synthase family. In terms of assembly, homodimer. Requires [4Fe-4S] cluster as cofactor. It depends on [2Fe-2S] cluster as a cofactor.

It carries out the reaction (4R,5S)-dethiobiotin + (sulfur carrier)-SH + 2 reduced [2Fe-2S]-[ferredoxin] + 2 S-adenosyl-L-methionine = (sulfur carrier)-H + biotin + 2 5'-deoxyadenosine + 2 L-methionine + 2 oxidized [2Fe-2S]-[ferredoxin]. It participates in cofactor biosynthesis; biotin biosynthesis; biotin from 7,8-diaminononanoate: step 2/2. Functionally, catalyzes the conversion of dethiobiotin (DTB) to biotin by the insertion of a sulfur atom into dethiobiotin via a radical-based mechanism. The polypeptide is Biotin synthase (Desulfotalea psychrophila (strain LSv54 / DSM 12343)).